The sequence spans 44 residues: Defensin heliomicin (44 aa).

3 disulfide bridges follow: C7–C32, C18–C40, and C22–C42.

It is found in the secreted. In terms of biological role, this peptide has potent anti-fungal activity. Has no activity against Gram-negative and Gram-positive bacteria. The protein is Defensin heliomicin of Heliothis virescens (Tobacco budworm moth).